The primary structure comprises 647 residues: Protein cueball (647 aa).

A signal peptide spans 1 to 22 (MLWCPSVLVPLIAVAACLPVLA). The Extracellular portion of the chain corresponds to 23 to 534 (IGTPLEWEFA…CMTPSPWTSN (512 aa)). Residues Asn80 and Asn106 are each glycosylated (N-linked (GlcNAc...) asparagine). LDL-receptor class B repeat units lie at residues 119-166 (RNLF…DVCR), 167-211 (RKLY…DQLS), and 212-257 (DRIF…TNDA). Asn175 is a glycosylation site (N-linked (GlcNAc...) asparagine). An N-linked (GlcNAc...) asparagine glycan is attached at Asn316. 2 EGF-like domains span residues 365-401 (DEKT…SRCE) and 436-473 (EISK…ERCE). Intrachain disulfides connect Cys376-Cys389, Cys391-Cys400, Cys440-Cys450, Cys444-Cys461, and Cys463-Cys472. A glycan (N-linked (GlcNAc...) asparagine) is linked at Asn475. Residues 535-555 (VIIVLVLGIVSCFFLVAVIVH) traverse the membrane as a helical segment. At 556–647 (GFRRLYKPKR…LIHNMDDDLY (92 aa)) the chain is on the cytoplasmic side.

The protein belongs to the cueball family.

The protein resides in the cell membrane. Has a role in spermatogenesis and oogenesis. This Drosophila persimilis (Fruit fly) protein is Protein cueball.